Here is a 208-residue protein sequence, read N- to C-terminus: N-(5'-phosphoribosyl)anthranilate isomerase (208 aa).

This sequence belongs to the TrpF family.

The enzyme catalyses N-(5-phospho-beta-D-ribosyl)anthranilate = 1-(2-carboxyphenylamino)-1-deoxy-D-ribulose 5-phosphate. Its pathway is amino-acid biosynthesis; L-tryptophan biosynthesis; L-tryptophan from chorismate: step 3/5. In Neisseria meningitidis serogroup B (strain ATCC BAA-335 / MC58), this protein is N-(5'-phosphoribosyl)anthranilate isomerase.